The following is a 102-amino-acid chain: Small ribosomal subunit protein uS10 (102 aa).

The protein belongs to the universal ribosomal protein uS10 family. As to quaternary structure, part of the 30S ribosomal subunit.

In terms of biological role, involved in the binding of tRNA to the ribosomes. This is Small ribosomal subunit protein uS10 from Desulforamulus reducens (strain ATCC BAA-1160 / DSM 100696 / MI-1) (Desulfotomaculum reducens).